We begin with the raw amino-acid sequence, 323 residues long: Olfactory receptor 5P58 (323 aa).

Residues 1–28 (MAFLEDGNHTAVTEFILVGLTDDPVLKV) lie on the Extracellular side of the membrane. Asn8 carries an N-linked (GlcNAc...) asparagine glycan. A helical transmembrane segment spans residues 29 to 49 (ILFTIILCIYLVTVSGNLSTI). The Cytoplasmic segment spans residues 50–57 (LLIRVSSQ). Residues 58 to 78 (LHHPMYFFLSHLASVDLGYSS) traverse the membrane as a helical segment. Over 79–102 (SVTPNMLINFLAENNTISYIGCSI) the chain is Extracellular. N-linked (GlcNAc...) asparagine glycosylation is present at Asn92. Cys100 and Cys192 are joined by a disulfide. Residues 103-123 (QFGSATFFGVLECFLLAVMAY) traverse the membrane as a helical segment. Residues 124–136 (DRFVAICNPLLYS) lie on the Cytoplasmic side of the membrane. Residues 137-157 (IKMSTQVCVKLVVGSYIGSSL) form a helical membrane-spanning segment. The Extracellular segment spans residues 158 to 199 (NASFVTVSIFNLLFCGPNKINHFFCDFDPLIELSCSDVSVPV). Residues 200 to 220 (AVTSCSAGLITMITVFVIAVS) traverse the membrane as a helical segment. Residues 221-240 (YTYILITVLKMRSTEGRHKA) lie on the Cytoplasmic side of the membrane. A helical membrane pass occupies residues 241–261 (FSTCTSHLTAVTLFYGTVTFI). The Extracellular segment spans residues 262–274 (YVMPKSNYSTDQN). N-linked (GlcNAc...) asparagine glycosylation is present at Asn268. A helical transmembrane segment spans residues 275–295 (KVVSVFYMVVIPMLNPLIYSL). At 296–323 (RNNEIKGALKRQLGKKIFSQSNILFCKS) the chain is on the cytoplasmic side.

It belongs to the G-protein coupled receptor 1 family.

Its subcellular location is the cell membrane. Potential odorant receptor. In Mus musculus (Mouse), this protein is Olfactory receptor 5P58.